The following is a 402-amino-acid chain: Protein DesVIII (402 aa).

It belongs to the cytochrome P450 family. In terms of assembly, forms a complex with DesVII.

It participates in antibiotic biosynthesis. In terms of biological role, involved in the biosynthesis of the macrolide antibiotics methymycin, neomethymycin, narbomycin, and pikromycin. DesVIII assists the folding of the DesVII polypeptide. However, unlike chaperones, it remains bound to DesVII during catalysis, forming a tight DesVII/DesVIII complex. Although the formation of the DesVII/DesVIII complex is essential for the catalytic activity, DesVIII is unlikely to be involved in catalysis directly. In Streptomyces venezuelae, this protein is Protein DesVIII.